The following is a 590-amino-acid chain: (+)-sabinene synthase, chloroplastic (590 aa).

The N-terminal 51 residues, 1–51 (MSSISINIAMPLNSLHNFERKPSKAWSTSCTAPAARLRASSSLQQEKPHQI), are a transit peptide targeting the chloroplast. Positions 343, 347, 487, 491, and 495 each coordinate Mg(2+). The short motif at 343 to 347 (DDVYD) is the DDXXD motif element.

Belongs to the terpene synthase family. In terms of assembly, monomer. It depends on Mg(2+) as a cofactor.

The protein localises to the plastid. It is found in the chloroplast. The enzyme catalyses (2E)-geranyl diphosphate = (1R,5R)-sabinene + diphosphate. It participates in terpene metabolism; sabinene hydrate biosynthesis. Its function is as follows. Catalyzes the formation of the (-)-3-isothujone precursor sabinene from geranyl diphosphate. The enzyme also produces significant amounts of gamma-terpinene, terpinolene and limonene. This is (+)-sabinene synthase, chloroplastic from Salvia officinalis (Sage).